Reading from the N-terminus, the 381-residue chain is ATP synthase subunit a (381 aa).

The tract at residues 24 to 73 (PVAAPVEQHGQAPEAAPDAHGSPAGEPGAAVEAHAAAAEHGEAAGHEGGH) is disordered. Residues 47–59 (AGEPGAAVEAHAA) are compositionally biased toward low complexity. The segment covering 60–73 (AAEHGEAAGHEGGH) has biased composition (basic and acidic residues). 6 helical membrane-spanning segments follow: residues 128–148 (KHVV…LGAV), 190–210 (LVTA…PFSA), 215–235 (NLSV…YAAI), 255–275 (LAPL…TKPF), 290–310 (FVIL…VAFG), and 316–336 (LSIF…FTML). Basic and acidic residues predominate over residues 351-360 (DHGHAEEHGH). Positions 351–381 (DHGHAEEHGHAGPAAGSEHGSHVAGASPGHG) are disordered.

It belongs to the ATPase A chain family. In terms of assembly, F-type ATPases have 2 components, CF(1) - the catalytic core - and CF(0) - the membrane proton channel. CF(1) has five subunits: alpha(3), beta(3), gamma(1), delta(1), epsilon(1). CF(0) has three main subunits: a(1), b(2) and c(9-12). The alpha and beta chains form an alternating ring which encloses part of the gamma chain. CF(1) is attached to CF(0) by a central stalk formed by the gamma and epsilon chains, while a peripheral stalk is formed by the delta and b chains.

The protein resides in the cell inner membrane. In terms of biological role, key component of the proton channel; it plays a direct role in the translocation of protons across the membrane. The polypeptide is ATP synthase subunit a (Anaeromyxobacter dehalogenans (strain 2CP-C)).